A 203-amino-acid polypeptide reads, in one-letter code: WUSCHEL-related homeobox 3 (203 aa).

The homeobox; WUS-type DNA-binding region spans 4 to 68 (TPSTRWCPTP…NHKARERQRL (65 aa)). Disordered regions lie at residues 73–95 (CARHQQQPSPPSSTVPPAPTAAA), 109–135 (LHHHHHHHHPYAAAAAAQSHHLQQQQQ), and 180–203 (STSGGLKEDCCSSSKSSSCSTSTN). A compositionally biased stretch (pro residues) spans 80–91 (PSPPSSTVPPAP). Over residues 109–118 (LHHHHHHHHP) the composition is skewed to basic residues. Low complexity-rich tracts occupy residues 119–135 (YAAAAAAQSHHLQQQQQ) and 190–203 (CSSSKSSSCSTSTN).

It belongs to the WUS homeobox family.

Its subcellular location is the nucleus. Functionally, transcription factor which may be involved in developmental processes. This is WUSCHEL-related homeobox 3 (WOX3) from Oryza sativa subsp. indica (Rice).